The chain runs to 488 residues: Fumarate hydratase, mitochondrial (488 aa).

The N-terminal 24 residues, 1-24, are a transit peptide targeting the mitochondrion; the sequence is MLRFTNCSCKTFVKSSYKLNIRRM. Substrate is bound by residues 124–126, 154–157, 164–166, and Thr-212; these read SGT, HPNN, and SSN. The active-site Proton donor/acceptor is the His-213. Ser-343 is a catalytic residue. Substrate-binding positions include Ser-344 and 349–351; that span reads KVN. Thr-428 is modified (phosphothreonine).

This sequence belongs to the class-II fumarase/aspartase family. Fumarase subfamily. In terms of assembly, homotetramer.

Its subcellular location is the mitochondrion matrix. It localises to the cytoplasm. It is found in the nucleus. The enzyme catalyses (S)-malate = fumarate + H2O. The protein operates within carbohydrate metabolism; tricarboxylic acid cycle; (S)-malate from fumarate: step 1/1. Its function is as follows. Catalyzes the reversible stereospecific interconversion of fumarate to L-malate. In mitochondrion, catalyzes the hydration of fumarate to L-malate in the tricarboxylic acid (TCA) cycle to facilitate a transition step in the production of energy in the form of NADH. In cytoplasm and nucleus, involved in DNA repair in response to DNA damage: following DNA double-strand breaks (DSBs), translocates from the cytosol to the nucleus and promotes DNA repair by catalyzing the dehydration of L-malate to fumarate. This Saccharomyces cerevisiae (strain ATCC 204508 / S288c) (Baker's yeast) protein is Fumarate hydratase, mitochondrial.